The primary structure comprises 120 residues: NAD(P)H-quinone oxidoreductase subunit 3, chloroplastic (120 aa).

3 helical membrane passes run 9–29 (IFWA…FISG), 64–84 (MFAL…PWAM), and 88–108 (VLGV…ILGL).

This sequence belongs to the complex I subunit 3 family. NDH is composed of at least 16 different subunits, 5 of which are encoded in the nucleus.

Its subcellular location is the plastid. It is found in the chloroplast thylakoid membrane. It carries out the reaction a plastoquinone + NADH + (n+1) H(+)(in) = a plastoquinol + NAD(+) + n H(+)(out). It catalyses the reaction a plastoquinone + NADPH + (n+1) H(+)(in) = a plastoquinol + NADP(+) + n H(+)(out). Its function is as follows. NDH shuttles electrons from NAD(P)H:plastoquinone, via FMN and iron-sulfur (Fe-S) centers, to quinones in the photosynthetic chain and possibly in a chloroplast respiratory chain. The immediate electron acceptor for the enzyme in this species is believed to be plastoquinone. Couples the redox reaction to proton translocation, and thus conserves the redox energy in a proton gradient. In Barbarea verna (Land cress), this protein is NAD(P)H-quinone oxidoreductase subunit 3, chloroplastic.